The following is a 295-amino-acid chain: F-box only protein 8 (295 aa).

In terms of domain architecture, F-box spans 35 to 80; it reads TWVARYIPQDLLIEILTRLPPKSVMRFKCVSKFWSSLLSSRYFCNR.

The polypeptide is F-box only protein 8 (FBX8) (Arabidopsis thaliana (Mouse-ear cress)).